The sequence spans 224 residues: ATP synthase subunit a (224 aa).

6 helical membrane passes run Leu17 to Leu37, Ile72 to Ile92, Leu99 to Ile119, Met125 to Ile145, Gly155 to Leu175, and Tyr184 to Val204.

The protein belongs to the ATPase A chain family. F-type ATPases have 2 components, CF(1) - the catalytic core - and CF(0) - the membrane proton channel. CF(1) has five subunits: alpha(3), beta(3), gamma(1), delta(1), epsilon(1). CF(0) has three main subunits: a, b and c.

The protein localises to the mitochondrion inner membrane. Functionally, mitochondrial membrane ATP synthase (F(1)F(0) ATP synthase or Complex V) produces ATP from ADP in the presence of a proton gradient across the membrane which is generated by electron transport complexes of the respiratory chain. F-type ATPases consist of two structural domains, F(1) - containing the extramembraneous catalytic core and F(0) - containing the membrane proton channel, linked together by a central stalk and a peripheral stalk. During catalysis, ATP synthesis in the catalytic domain of F(1) is coupled via a rotary mechanism of the central stalk subunits to proton translocation. Key component of the proton channel; it may play a direct role in the translocation of protons across the membrane. In Drosophila yakuba (Fruit fly), this protein is ATP synthase subunit a (mt:ATPase6).